We begin with the raw amino-acid sequence, 179 residues long: Repressor of phase 1 flagellin gene (179 aa).

In terms of biological role, transcriptional repressor of the FliC phase-1 flagellin. This chain is Repressor of phase 1 flagellin gene (fljA), found in Salmonella typhimurium (strain LT2 / SGSC1412 / ATCC 700720).